A 947-amino-acid chain; its full sequence is MGFWENNKDSITSGLKSAGKYGYQGTKYVAKTGYKASKKHYNNSKARRERKSGKKNSSDEEYDSEDEMEYERKPTDIRSLKDPKSFPPPPLKPGQKTYTGQQQQQMPNGQASYAFQGAYQGQPGAGSMEQSQYAQPQYNQYPQQQLQQGVMPQQQQLQQGVVPQQPPIYGEQVPPYGSNSNATSYQSLPQQNQPQNAIPSQVSLNSASQQSTGFVSQNLQYGTQSSNPAPSPSFQNGLQCHQQPQYVSHGSTNLGQSQFPSGQQQQPTTQFGQQVLPSPAQPQQQQQGQPLPPPRGQVILPAPGEPLSNGFGQQQQQQQQQQQPLNQNNALLPQMNVEGVSGMAAVQPVYGQAMSSTTNMQDSNPSYGASPMQGQPPVGGQPPVPVRMQPQPPQPMQQGNIYPIEPSLDSTGSTPHFEVTPFDPDAPAPKPKIDIPTVDVSSLPPPPTHRDRGAVVHQEPAPSGKIQPNTTSSAASLPAKHSRTTTADNERNSGNKENDESTSKSSILGHYDVDVNIMPPPKPFRHGLDSVPSEHTRKNAPERAVPILPPRNNVEPPPPPSRGNFERTESVLSTNAANVQEDPISNFLPPPKPFRHTETKQNQNSKASPVEMKGEVLPGHPSEEDRNVEPSLVPQSKPQSQSQFRRAHMETQPIQNFQPPPKPFRRSQSSNSSDSSYTIDGPEANHGRGRGRIAKHHDGDEYNPKSENSTENGRLGDAPNSFIRKRAPTPPAPSRSEKLHEGTITSEVDSSKDANKYEKSIPPVTSSIQAQQSTKKAPPPVVKPKPRNFSLKANEYPKELTREATGQDEVLNSITNELSHIKLRKTNVNLEKLGGSKKVKDSSPVPSDLDEKYVSASGSITPPRPPPSRSSPKKVPPVVPKNNDNLKKKPPVVPKKKPLLKSLEPRPIEMERAYSGDISAADDNLNPFERYKRNVVPQEDDRLHKLK.

Disordered regions lie at residues 1–332 (MGFW…NALL), 354–810 (MSST…QDEV), and 824–904 (RKTN…KSLE). Over residues 36-54 (ASKKHYNNSKARRERKSGK) the composition is skewed to basic residues. Phosphoserine is present on residues S57, S58, and S64. The segment covering 59 to 69 (DEEYDSEDEME) has biased composition (acidic residues). A compositionally biased stretch (basic and acidic residues) spans 70 to 84 (YERKPTDIRSLKDPK). 2 stretches are compositionally biased toward low complexity: residues 93 to 105 (PGQK…QQQQ) and 130 to 163 (QSQY…GVVP). Over residues 177–255 (GSNSNATSYQ…YVSHGSTNLG (79 aa)) the composition is skewed to polar residues. Low complexity-rich tracts occupy residues 256–289 (QSQF…QQGQ) and 313–332 (QQQQ…NALL). The segment covering 354–367 (MSSTTNMQDSNPSY) has biased composition (polar residues). A compositionally biased stretch (pro residues) spans 379-395 (GGQPPVPVRMQPQPPQP). The segment covering 466–475 (IQPNTTSSAA) has biased composition (polar residues). Phosphoserine is present on S476. Basic and acidic residues-rich tracts occupy residues 488–502 (DNER…DEST) and 526–541 (HGLD…KNAP). Polar residues predominate over residues 633–644 (VPQSKPQSQSQF). Positions 667–676 (SQSSNSSDSS) are enriched in low complexity. Phosphothreonine is present on T729. A compositionally biased stretch (basic and acidic residues) spans 749-759 (DSSKDANKYEK). Positions 763–774 (PVTSSIQAQQST) are enriched in polar residues. At T861 the chain carries Phosphothreonine. Residues 862–879 (PPRPPPSRSSPKKVPPVV) are compositionally biased toward pro residues. Basic residues predominate over residues 888-899 (KKPPVVPKKKPL).

It belongs to the AIM3 family. As to quaternary structure, interacts with RVS167.

The protein resides in the membrane raft. This Saccharomyces cerevisiae (strain JAY291) (Baker's yeast) protein is Altered inheritance of mitochondria protein 3 (AIM3).